Consider the following 288-residue polypeptide: ATP synthase gamma chain (288 aa).

This sequence belongs to the ATPase gamma chain family. F-type ATPases have 2 components, CF(1) - the catalytic core - and CF(0) - the membrane proton channel. CF(1) has five subunits: alpha(3), beta(3), gamma(1), delta(1), epsilon(1). CF(0) has three main subunits: a, b and c.

Its subcellular location is the cell membrane. Produces ATP from ADP in the presence of a proton gradient across the membrane. The gamma chain is believed to be important in regulating ATPase activity and the flow of protons through the CF(0) complex. In Staphylococcus epidermidis (strain ATCC 35984 / DSM 28319 / BCRC 17069 / CCUG 31568 / BM 3577 / RP62A), this protein is ATP synthase gamma chain.